We begin with the raw amino-acid sequence, 277 residues long: Putative phosphoenolpyruvate synthase regulatory protein (277 aa).

152 to 159 (GVSRCGKT) contributes to the ADP binding site.

The protein belongs to the pyruvate, phosphate/water dikinase regulatory protein family. PSRP subfamily.

It carries out the reaction [pyruvate, water dikinase] + ADP = [pyruvate, water dikinase]-phosphate + AMP + H(+). The enzyme catalyses [pyruvate, water dikinase]-phosphate + phosphate + H(+) = [pyruvate, water dikinase] + diphosphate. Its function is as follows. Bifunctional serine/threonine kinase and phosphorylase involved in the regulation of the phosphoenolpyruvate synthase (PEPS) by catalyzing its phosphorylation/dephosphorylation. The polypeptide is Putative phosphoenolpyruvate synthase regulatory protein (Chromohalobacter salexigens (strain ATCC BAA-138 / DSM 3043 / CIP 106854 / NCIMB 13768 / 1H11)).